Here is a 313-residue protein sequence, read N- to C-terminus: Formimidoylglutamase (313 aa).

Residues His-130, Asp-155, His-157, Asp-159, Asp-241, and Asp-243 each contribute to the Mn(2+) site.

Belongs to the arginase family. It depends on Mn(2+) as a cofactor.

It catalyses the reaction N-formimidoyl-L-glutamate + H2O = formamide + L-glutamate. The protein operates within amino-acid degradation; L-histidine degradation into L-glutamate; L-glutamate from N-formimidoyl-L-glutamate (hydrolase route): step 1/1. Functionally, catalyzes the conversion of N-formimidoyl-L-glutamate to L-glutamate and formamide. This Salmonella paratyphi A (strain ATCC 9150 / SARB42) protein is Formimidoylglutamase.